Consider the following 259-residue polypeptide: Global transcriptional regulator CodY (259 aa).

Positions 1–155 (MNLLEKTRQL…SATVVGMEIL (155 aa)) are GAF domain. Positions 203–222 (ASKIADRVGITRSVIVNALR) form a DNA-binding region, H-T-H motif.

It belongs to the CodY family.

Its subcellular location is the cytoplasm. Functionally, DNA-binding global transcriptional regulator which is involved in the adaptive response to starvation and acts by directly or indirectly controlling the expression of numerous genes in response to nutrient availability. During rapid exponential growth, CodY is highly active and represses genes whose products allow adaptation to nutrient depletion. The sequence is that of Global transcriptional regulator CodY from Exiguobacterium sp. (strain ATCC BAA-1283 / AT1b).